A 116-amino-acid chain; its full sequence is Putative pterin-4-alpha-carbinolamine dehydratase (116 aa).

Belongs to the pterin-4-alpha-carbinolamine dehydratase family.

It carries out the reaction (4aS,6R)-4a-hydroxy-L-erythro-5,6,7,8-tetrahydrobiopterin = (6R)-L-erythro-6,7-dihydrobiopterin + H2O. The protein is Putative pterin-4-alpha-carbinolamine dehydratase of Stenotrophomonas maltophilia (strain R551-3).